A 147-amino-acid polypeptide reads, in one-letter code: Arginine repressor (147 aa).

Belongs to the ArgR family.

It is found in the cytoplasm. Its pathway is amino-acid biosynthesis; L-arginine biosynthesis [regulation]. Its function is as follows. Regulates arginine biosynthesis genes. This Chlamydia caviae (strain ATCC VR-813 / DSM 19441 / 03DC25 / GPIC) (Chlamydophila caviae) protein is Arginine repressor.